The following is a 34-amino-acid chain: uncharacterized protein (34 aa).

Residues 1–12 (MFSHFEVSENRP) are compositionally biased toward basic and acidic residues. The disordered stretch occupies residues 1 to 21 (MFSHFEVSENRPRKQPRRKRI).

This is an uncharacterized protein from Saccharomyces cerevisiae (strain ATCC 204508 / S288c) (Baker's yeast).